The sequence spans 421 residues: Gamma-glutamyl phosphate reductase (421 aa).

It belongs to the gamma-glutamyl phosphate reductase family.

The protein resides in the cytoplasm. It carries out the reaction L-glutamate 5-semialdehyde + phosphate + NADP(+) = L-glutamyl 5-phosphate + NADPH + H(+). It functions in the pathway amino-acid biosynthesis; L-proline biosynthesis; L-glutamate 5-semialdehyde from L-glutamate: step 2/2. In terms of biological role, catalyzes the NADPH-dependent reduction of L-glutamate 5-phosphate into L-glutamate 5-semialdehyde and phosphate. The product spontaneously undergoes cyclization to form 1-pyrroline-5-carboxylate. This Acinetobacter baumannii (strain ATCC 17978 / DSM 105126 / CIP 53.77 / LMG 1025 / NCDC KC755 / 5377) protein is Gamma-glutamyl phosphate reductase.